A 621-amino-acid chain; its full sequence is KIF-binding protein (621 aa).

Ser178 carries the post-translational modification Phosphoserine.

The protein belongs to the KIF-binding protein family. Interacts with KIF1B; positively regulates KIF1B microtubule motor activity. Interacts with STMN2.

It is found in the cytoplasm. The protein localises to the cytoskeleton. Activator of KIF1B plus-end-directed microtubule motor activity. Required for organization of axonal microtubules, and axonal outgrowth and maintenance during peripheral and central nervous system development. This chain is KIF-binding protein (KIFBP), found in Bos taurus (Bovine).